A 396-amino-acid polypeptide reads, in one-letter code: ATP-dependent RNA helicase eIF4A (396 aa).

The Q motif signature appears at 23–51; sequence YEFDDMNLNEKLLRGVFGYGFNKPSAIQQ. The region spanning 54 to 223 is the Helicase ATP-binding domain; sequence IMPIIEGNDV…AKFMQNPVRI (170 aa). 67–74 contacts ATP; it reads AQSGTGKT. A DEAD box motif is present at residues 171 to 174; it reads DEAD. Residues 234–395 form the Helicase C-terminal domain; sequence GIKQFYVNVE…ELPSDIGTLF (162 aa).

This sequence belongs to the DEAD box helicase family. eIF4A subfamily. In terms of assembly, component of the eIF4F complex, which composition varies with external and internal environmental conditions. It is composed of at least eIF4A, eIF4E and eIF4G.

It is found in the cytoplasm. It carries out the reaction ATP + H2O = ADP + phosphate + H(+). In terms of biological role, ATP-dependent RNA helicase which is a subunit of the eIF4F complex involved in cap recognition and is required for mRNA binding to ribosome. In the current model of translation initiation, eIF4A unwinds RNA secondary structures in the 5'-UTR of mRNAs which is necessary to allow efficient binding of the small ribosomal subunit, and subsequent scanning for the initiator codon. This is ATP-dependent RNA helicase eIF4A (TIF1) from Candida glabrata (strain ATCC 2001 / BCRC 20586 / JCM 3761 / NBRC 0622 / NRRL Y-65 / CBS 138) (Yeast).